The chain runs to 337 residues: Heme A synthase (337 aa).

5 helical membrane-spanning segments follow: residues 6–26, 87–107, 119–139, 154–174, and 192–212; these read ITKW…IGGI, FIHR…LIYF, LPYI…WYMV, LAFH…QLIK, and LIFS…GALV. Heme is bound at residue His256. A run of 3 helical transmembrane segments spans residues 258-278, 285-305, and 308-328; these read LVGY…LKIE, IAYF…LTLL, and VPII…SIII. His316 provides a ligand contact to heme.

Belongs to the COX15/CtaA family. Type 2 subfamily. As to quaternary structure, interacts with CtaB. It depends on heme b as a cofactor.

Its subcellular location is the cell membrane. The catalysed reaction is Fe(II)-heme o + 2 A + H2O = Fe(II)-heme a + 2 AH2. Its pathway is porphyrin-containing compound metabolism; heme A biosynthesis; heme A from heme O: step 1/1. Functionally, catalyzes the conversion of heme O to heme A by two successive hydroxylations of the methyl group at C8. The first hydroxylation forms heme I, the second hydroxylation results in an unstable dihydroxymethyl group, which spontaneously dehydrates, resulting in the formyl group of heme A. This chain is Heme A synthase, found in Rickettsia conorii (strain ATCC VR-613 / Malish 7).